The chain runs to 228 residues: Uracil-DNA glycosylase (228 aa).

Asp-64 serves as the catalytic Proton acceptor.

This sequence belongs to the uracil-DNA glycosylase (UDG) superfamily. UNG family.

It localises to the cytoplasm. The catalysed reaction is Hydrolyzes single-stranded DNA or mismatched double-stranded DNA and polynucleotides, releasing free uracil.. Functionally, excises uracil residues from the DNA which can arise as a result of misincorporation of dUMP residues by DNA polymerase or due to deamination of cytosine. The protein is Uracil-DNA glycosylase of Yersinia pseudotuberculosis serotype O:1b (strain IP 31758).